Consider the following 52-residue polypeptide: Large ribosomal subunit protein bL33 (52 aa).

This sequence belongs to the bacterial ribosomal protein bL33 family.

The protein is Large ribosomal subunit protein bL33 of Campylobacter jejuni subsp. doylei (strain ATCC BAA-1458 / RM4099 / 269.97).